Reading from the N-terminus, the 67-residue chain is Retron Se72 cold shock-like protein (67 aa).

In terms of domain architecture, CSD spans 1–66; the sequence is MENGFVNFYD…KGFKAVAIQK (66 aa).

Its function is as follows. Probable cold shock-like component of antiviral defense system retron Se72, composed of a non-coding RNA (ncRNA), a reverse transcriptase (RT) and this protein. Expression of retron Se72 confers protection against bacteriophage lambda. At multiplicity of infection (MOI) of 0.02 cultures slow growth when infected with lambda but do not collapse, at MOI 2 cultures enter growth stasis. The protein is Retron Se72 cold shock-like protein of Salmonella heidelberg (strain 579083-10).